A 544-amino-acid chain; its full sequence is Putative ankyrin repeat protein L289 (544 aa).

11 ANK repeats span residues 31–71 (KNFS…AQNE), 72–105 (HGWT…DPNI), 110–143 (YSQT…DINH), 147–181 (LGVS…DINS), 185–218 (QGNT…DPNI), 222–255 (KGTT…NINF), 259–297 (YNET…DIPI), 300–339 (DKLS…IQCS), 340–374 (NGKT…NPNI), 378–413 (QGKT…TIDN), and 414–447 (TGQS…CVNK).

This chain is Putative ankyrin repeat protein L289, found in Acanthamoeba polyphaga mimivirus (APMV).